The primary structure comprises 195 residues: C2 domain-containing protein DDB_G0290753 (195 aa).

Residues 38–161 (KKLTKETKFE…NIKKYSYTFK (124 aa)) enclose the C2 domain. Ca(2+)-binding residues include aspartate 72, aspartate 78, aspartate 131, aspartate 133, and aspartate 139.

Ca(2+) is required as a cofactor.

The polypeptide is C2 domain-containing protein DDB_G0290753 (Dictyostelium discoideum (Social amoeba)).